Consider the following 332-residue polypeptide: ADP-L-glycero-D-manno-heptose-6-epimerase (332 aa).

NADP(+) contacts are provided by residues 11–12 (FI), 32–33 (DN), lysine 39, lysine 54, 76–80 (EGACS), and asparagine 93. The active-site Proton acceptor is the tyrosine 140. An NADP(+)-binding site is contributed by lysine 144. Residue asparagine 170 coordinates substrate. Positions 171 and 179 each coordinate NADP(+). Residue lysine 179 is the Proton acceptor of the active site. Residues arginine 181, histidine 188, 202–205 (FEGS), arginine 215, and tyrosine 294 contribute to the substrate site.

Belongs to the NAD(P)-dependent epimerase/dehydratase family. HldD subfamily. In terms of assembly, homopentamer. NADP(+) serves as cofactor.

The enzyme catalyses ADP-D-glycero-beta-D-manno-heptose = ADP-L-glycero-beta-D-manno-heptose. It participates in nucleotide-sugar biosynthesis; ADP-L-glycero-beta-D-manno-heptose biosynthesis; ADP-L-glycero-beta-D-manno-heptose from D-glycero-beta-D-manno-heptose 7-phosphate: step 4/4. Its function is as follows. Catalyzes the interconversion between ADP-D-glycero-beta-D-manno-heptose and ADP-L-glycero-beta-D-manno-heptose via an epimerization at carbon 6 of the heptose. The polypeptide is ADP-L-glycero-D-manno-heptose-6-epimerase (Dechloromonas aromatica (strain RCB)).